A 507-amino-acid chain; its full sequence is Beta-glucosidase 3 (507 aa).

Residues 1–23 form the signal peptide; sequence MELTLSLLTIFLLFFALSGRCSD. Gln-41 provides a ligand contact to a beta-D-glucoside. N-linked (GlcNAc...) asparagine glycosylation is present at Asn-64. Residues His-138 and 183-184 contribute to the a beta-D-glucoside site; that span reads NE. The active-site Proton donor is Glu-184. A disulfide bridge connects residues Cys-203 and Cys-210. Asn-209 and Asn-214 each carry an N-linked (GlcNAc...) asparagine glycan. Tyr-326 is an a beta-D-glucoside binding site. Asn-361 carries an N-linked (GlcNAc...) asparagine glycan. Glu-394 is an a beta-D-glucoside binding site. The Nucleophile role is filled by Glu-394. Asn-429 is a glycosylation site (N-linked (GlcNAc...) asparagine). A beta-D-glucoside is bound by residues Trp-439 and Phe-455. Residues Asn-461, Asn-485, and Asn-500 are each glycosylated (N-linked (GlcNAc...) asparagine).

The protein belongs to the glycosyl hydrolase 1 family.

It carries out the reaction Hydrolysis of terminal, non-reducing beta-D-glucosyl residues with release of beta-D-glucose.. The chain is Beta-glucosidase 3 from Arabidopsis thaliana (Mouse-ear cress).